A 78-amino-acid chain; its full sequence is Small ribosomal subunit protein bS18 (78 aa).

This sequence belongs to the bacterial ribosomal protein bS18 family. Part of the 30S ribosomal subunit. Forms a tight heterodimer with protein bS6.

Functionally, binds as a heterodimer with protein bS6 to the central domain of the 16S rRNA, where it helps stabilize the platform of the 30S subunit. The chain is Small ribosomal subunit protein bS18 from Limosilactobacillus fermentum (strain NBRC 3956 / LMG 18251) (Lactobacillus fermentum).